The following is a 1181-amino-acid chain: C5a peptidase (1181 aa).

An N-terminal signal peptide occupies residues 1–31 (MRKKQKLPFDKLAIALMSTSILLNAQSDIKA). Polar residues predominate over residues 33–52 (TVTEDTPATEQAVETPQPTA). The disordered stretch occupies residues 33 to 117 (TVTEDTPATE…PSQVKTLQEK (85 aa)). A compositionally biased stretch (acidic residues) spans 70 to 81 (DDAEETIADDAN). The Peptidase S8 domain maps to 99–581 (KATIRDLNDP…AGAVDAKKAS (483 aa)). Catalysis depends on charge relay system residues aspartate 130, histidine 193, and serine 512. Basic and acidic residues-rich tracts occupy residues 1029 to 1054 (EGHSNKPEQDGSDQAPDKKPETKPEQ), 1061 to 1071 (PDKKPETKPEQ), 1078 to 1088 (PDKKPETKPEQ), and 1095 to 1107 (PDKKPETKPEKDS). A disordered region spans residues 1029-1150 (EGHSNKPEQD…KDQLPTTNDK (122 aa)). Tandem repeats lie at residues 1034-1050 (KPEQDGSDQAPDKKPET), 1051-1067 (KPEQDGSGQAPDKKPET), 1068-1084 (KPEQDGSGQTPDKKPET), 1085-1101 (KPEQDGSGQTPDKKPET), and 1102-1118 (KPEKDSSGQTPGKTPQK). Positions 1034–1118 (KPEQDGSDQA…GQTPGKTPQK (85 aa)) are 5 X 17 AA tandem repeats. Composition is skewed to polar residues over residues 1109–1123 (GQTPGKTPQKGQPSR) and 1137–1147 (KASTKDQLPTT). The LPXTG sorting signal signature appears at 1144–1148 (LPTTN). Position 1147 is a pentaglycyl murein peptidoglycan amidated threonine (threonine 1147). The propeptide at 1148–1181 (NDKDTNRLHLLKLVMTTFFLGLVAHIFKTKRTED) is removed by sortase.

This sequence belongs to the peptidase S8 family. In terms of processing, cleaved by SpeB protease; leading to its degradation. Degradation by SpeB is probably strictly regulated to preserve integrity of C5a peptidase.

The protein resides in the secreted. It is found in the cell wall. The catalysed reaction is The primary cleavage site is at 67-His-|-Lys-68 in human C5a with a minor secondary cleavage site at 58-Ala-|-Ser-59.. This virulence factor of S.pyogenes specifically cleaves the human serum chemotaxin C5a at '68-Lys-|-Asp-69' bond near its C-terminus, destroying its ability to serve as a chemoattractant. The chain is C5a peptidase (scpA) from Streptococcus pyogenes serotype M1.